The primary structure comprises 181 residues: Dual-action ribosomal maturation protein DarP (181 aa).

It belongs to the DarP family.

The protein resides in the cytoplasm. In terms of biological role, member of a network of 50S ribosomal subunit biogenesis factors which assembles along the 30S-50S interface, preventing incorrect 23S rRNA structures from forming. Promotes peptidyl transferase center (PTC) maturation. The protein is Dual-action ribosomal maturation protein DarP of Actinobacillus succinogenes (strain ATCC 55618 / DSM 22257 / CCUG 43843 / 130Z).